Here is a 369-residue protein sequence, read N- to C-terminus: Peptide chain release factor subunit 1 (369 aa).

This sequence belongs to the eukaryotic release factor 1 family. Heterodimer of two subunits, one of which binds GTP.

It localises to the cytoplasm. Functionally, directs the termination of nascent peptide synthesis (translation) in response to the termination codons UAA, UAG and UGA. In Saccharolobus solfataricus (strain ATCC 35092 / DSM 1617 / JCM 11322 / P2) (Sulfolobus solfataricus), this protein is Peptide chain release factor subunit 1 (prf1).